Here is a 908-residue protein sequence, read N- to C-terminus: Protein translocase subunit SecA (908 aa).

Residues Gln90, 108 to 112 (GEGKT), and Asp503 each bind ATP. A compositionally biased stretch (low complexity) spans 846–864 (AAAAEAPVAPAPQPAAAAP). Residues 846-884 (AAAAEAPVAPAPQPAAAAPQPTPELVGAEAGEPDPAAWG) form a disordered region. Zn(2+) is bound by residues Cys892, Cys894, Cys903, and His904.

It belongs to the SecA family. As to quaternary structure, monomer and homodimer. Part of the essential Sec protein translocation apparatus which comprises SecA, SecYEG and auxiliary proteins SecDF-YajC and YidC. Zn(2+) is required as a cofactor.

The protein localises to the cell inner membrane. It localises to the cytoplasm. The enzyme catalyses ATP + H2O + cellular proteinSide 1 = ADP + phosphate + cellular proteinSide 2.. Part of the Sec protein translocase complex. Interacts with the SecYEG preprotein conducting channel. Has a central role in coupling the hydrolysis of ATP to the transfer of proteins into and across the cell membrane, serving both as a receptor for the preprotein-SecB complex and as an ATP-driven molecular motor driving the stepwise translocation of polypeptide chains across the membrane. This Cereibacter sphaeroides (strain ATCC 17029 / ATH 2.4.9) (Rhodobacter sphaeroides) protein is Protein translocase subunit SecA.